Consider the following 134-residue polypeptide: Probable RNA-binding protein MJ0652 (134 aa).

Positions 11 to 108 constitute a CRM domain; it reads RKLTGKMKRM…REGWKKYLAK (98 aa).

This Methanocaldococcus jannaschii (strain ATCC 43067 / DSM 2661 / JAL-1 / JCM 10045 / NBRC 100440) (Methanococcus jannaschii) protein is Probable RNA-binding protein MJ0652.